A 307-amino-acid polypeptide reads, in one-letter code: Transcription initiation factor IIB 5 (307 aa).

Residues Thr19–Asp47 form a TFIIB-type zinc finger. Zn(2+) contacts are provided by Cys23, Cys26, Cys39, and Cys42. 2 stretches are compositionally biased toward basic and acidic residues: residues Gly54–Lys66 and Met107–Glu121. The disordered stretch occupies residues Gly54–Glu121. Repeat copies occupy residues Thr129–Leu212 and Gln223–Ser304.

The protein belongs to the TFIIB family.

Its function is as follows. Stabilizes TBP binding to an archaeal box-A promoter. Also responsible for recruiting RNA polymerase II to the pre-initiation complex (DNA-TBP-TFIIB). The sequence is that of Transcription initiation factor IIB 5 from Halobacterium salinarum (strain ATCC 700922 / JCM 11081 / NRC-1) (Halobacterium halobium).